Here is a 107-residue protein sequence, read N- to C-terminus: Glutaredoxin-1 (107 aa).

N-acetylalanine is present on A2. One can recognise a Glutaredoxin domain in the interval 3–106 (QEFVNCKIQS…TRLKQIGALQ (104 aa)). K9 is modified (N6-succinyllysine). Cystine bridges form between C23–C26 and C79–C83.

This sequence belongs to the glutaredoxin family.

Its subcellular location is the cytoplasm. Has a glutathione-disulfide oxidoreductase activity in the presence of NADPH and glutathione reductase. Reduces low molecular weight disulfides and proteins. The sequence is that of Glutaredoxin-1 (Glrx) from Mus musculus (Mouse).